The primary structure comprises 374 residues: Dihydrolipoyllysine-residue acetyltransferase component of acetoin cleaving system (374 aa).

One can recognise a Lipoyl-binding domain in the interval 9–84; sequence IIPIVMPKWG…PVKALLGVLA (76 aa). Residue lysine 50 is modified to N6-lipoyllysine. Residues 137–360 enclose the AB hydrolase-1 domain; that stretch reads TVLFIHGFGG…DAGHMSQMEK (224 aa).

(R)-lipoate serves as cofactor.

It catalyses the reaction N(6)-[(R)-dihydrolipoyl]-L-lysyl-[protein] + acetyl-CoA = N(6)-[(R)-S(8)-acetyldihydrolipoyl]-L-lysyl-[protein] + CoA. It functions in the pathway ketone degradation; acetoin degradation. Its function is as follows. Dihydrolipoamide acetyltransferase involved in acetoin catabolism. The sequence is that of Dihydrolipoyllysine-residue acetyltransferase component of acetoin cleaving system (acoC) from Cupriavidus necator (strain ATCC 17699 / DSM 428 / KCTC 22496 / NCIMB 10442 / H16 / Stanier 337) (Ralstonia eutropha).